We begin with the raw amino-acid sequence, 113 residues long: uncharacterized protein (113 aa).

A run of 2 helical transmembrane segments spans residues 1-21 (MLIAGTLCVCAAVISAVFGTW) and 48-68 (IMLAAGGVVALVAVAHTALIV).

The protein to M.tuberculosis Rv0039.

It is found in the cell membrane. This is an uncharacterized protein from Mycobacterium leprae (strain TN).